We begin with the raw amino-acid sequence, 184 residues long: Holliday junction branch migration complex subunit RuvA (184 aa).

Residues 1-64 (MIKAIEGVVT…EDANLLYGFL (64 aa)) are domain I. Positions 65–134 (DANEQKMFEM…IAELSDTKLI (70 aa)) are domain II. Residues 134-137 (ISDE) are flexible linker. Residues 138-184 (SVPSYQNEALLALEALGFKREKIVKILPDCKSENTSDLIKEALKKLG) are domain III.

It belongs to the RuvA family. In terms of assembly, homotetramer. Forms an RuvA(8)-RuvB(12)-Holliday junction (HJ) complex. HJ DNA is sandwiched between 2 RuvA tetramers; dsDNA enters through RuvA and exits via RuvB. An RuvB hexamer assembles on each DNA strand where it exits the tetramer. Each RuvB hexamer is contacted by two RuvA subunits (via domain III) on 2 adjacent RuvB subunits; this complex drives branch migration. In the full resolvosome a probable DNA-RuvA(4)-RuvB(12)-RuvC(2) complex forms which resolves the HJ.

It is found in the cytoplasm. In terms of biological role, the RuvA-RuvB-RuvC complex processes Holliday junction (HJ) DNA during genetic recombination and DNA repair, while the RuvA-RuvB complex plays an important role in the rescue of blocked DNA replication forks via replication fork reversal (RFR). RuvA specifically binds to HJ cruciform DNA, conferring on it an open structure. The RuvB hexamer acts as an ATP-dependent pump, pulling dsDNA into and through the RuvAB complex. HJ branch migration allows RuvC to scan DNA until it finds its consensus sequence, where it cleaves and resolves the cruciform DNA. The sequence is that of Holliday junction branch migration complex subunit RuvA from Campylobacter concisus (strain 13826).